The following is a 353-amino-acid chain: UPF0283 membrane protein CKO_01392 (353 aa).

3 helical membrane-spanning segments follow: residues 70–90 (MVMG…VQWT), 99–119 (WVAL…VGSV), and 213–233 (ESTL…FIAW).

Belongs to the UPF0283 family.

Its subcellular location is the cell inner membrane. This Citrobacter koseri (strain ATCC BAA-895 / CDC 4225-83 / SGSC4696) protein is UPF0283 membrane protein CKO_01392.